The primary structure comprises 246 residues: Homeobox protein Hox-B4a (246 aa).

The interval 23–125 is disordered; sequence YSQSDYLPSH…SQNTSTVSSR (103 aa). Composition is skewed to polar residues over residues 39–48 and 112–123; these read AQRQDPSFQH and QTPTSQNTSTVS. An Antp-type hexapeptide motif is present at residues 130–135; it reads VYPWMK. The segment at residues 151–210 is a DNA-binding region (homeobox); it reads PKRSRTAYTRQQVLELEKEFHYNRYLTRRRRVEIAHTLCLSERQIKIWFQNRRMKWKKDH. Residues 210–246 form a disordered region; sequence HKLPNTKIRSNSASTNSSGCPTLCSNQSRASGPPPSL. A compositionally biased stretch (polar residues) spans 216 to 239; that stretch reads KIRSNSASTNSSGCPTLCSNQSRA.

This sequence belongs to the Antp homeobox family. Deformed subfamily.

The protein resides in the nucleus. Its function is as follows. Sequence-specific transcription factor which is part of a developmental regulatory system that provides cells with specific positional identities on the anterior-posterior axis. This is Homeobox protein Hox-B4a (hoxb4a) from Danio rerio (Zebrafish).